Here is a 438-residue protein sequence, read N- to C-terminus: tRNA modification GTPase MnmE (438 aa).

The (6S)-5-formyl-5,6,7,8-tetrahydrofolate site is built by R21, E79, and K118. Residues 215–362 (GFSIVLIGAP…LEARIEQIVR (148 aa)) form the TrmE-type G domain. Residue N225 coordinates K(+). Residues 225–230 (NAGKSS), 244–250 (TDIPGTT), and 269–272 (DTAG) contribute to the GTP site. Residue S229 coordinates Mg(2+). K(+) contacts are provided by T244, I246, and T249. Residue T250 coordinates Mg(2+). K438 provides a ligand contact to (6S)-5-formyl-5,6,7,8-tetrahydrofolate.

Belongs to the TRAFAC class TrmE-Era-EngA-EngB-Septin-like GTPase superfamily. TrmE GTPase family. Homodimer. Heterotetramer of two MnmE and two MnmG subunits. K(+) serves as cofactor.

The protein localises to the cytoplasm. In terms of biological role, exhibits a very high intrinsic GTPase hydrolysis rate. Involved in the addition of a carboxymethylaminomethyl (cmnm) group at the wobble position (U34) of certain tRNAs, forming tRNA-cmnm(5)s(2)U34. This is tRNA modification GTPase MnmE from Maricaulis maris (strain MCS10) (Caulobacter maris).